The primary structure comprises 164 residues: Small ribosomal subunit protein uS5 (164 aa).

The region spanning 10–73 (LEERVVAINR…EAAKKNLIEV (64 aa)) is the S5 DRBM domain.

It belongs to the universal ribosomal protein uS5 family. As to quaternary structure, part of the 30S ribosomal subunit. Contacts proteins S4 and S8.

In terms of biological role, with S4 and S12 plays an important role in translational accuracy. Located at the back of the 30S subunit body where it stabilizes the conformation of the head with respect to the body. The polypeptide is Small ribosomal subunit protein uS5 (Streptococcus thermophilus (strain CNRZ 1066)).